Reading from the N-terminus, the 1073-residue chain is Carbamoyl phosphate synthase large chain (1073 aa).

Residues 2–403 are carboxyphosphate synthetic domain; the sequence is PKRTDIKSIL…SLQKALRGLE (402 aa). Residues R129, R169, G175, G176, E208, L210, E215, G241, I242, H243, Q285, and E299 each contribute to the ATP site. Positions 133–328 constitute an ATP-grasp 1 domain; sequence DVAMKKIGLE…IAKVAAKLAV (196 aa). The Mg(2+) site is built by Q285, E299, and N301. Mn(2+) contacts are provided by Q285, E299, and N301. The interval 404–553 is oligomerization domain; sequence VGATGFDPKV…YSTYEEECEA (150 aa). A carbamoyl phosphate synthetic domain region spans residues 554-936; the sequence is NPSTDREKIM…AFAKAQLGSN (383 aa). An ATP-grasp 2 domain is found at 679-870; sequence QHAVDRLKLK…LAKVAARVMA (192 aa). Residues R715, H754, L756, E761, G786, V787, H788, S789, Q829, and E841 each contribute to the ATP site. Positions 829, 841, and 843 each coordinate Mg(2+). Residues Q829, E841, and N843 each contribute to the Mn(2+) site. The MGS-like domain occupies 937-1073; the sequence is STMKKHGRAL…SVQEMHAQIK (137 aa). The tract at residues 937–1073 is allosteric domain; it reads STMKKHGRAL…SVQEMHAQIK (137 aa).

It belongs to the CarB family. Composed of two chains; the small (or glutamine) chain promotes the hydrolysis of glutamine to ammonia, which is used by the large (or ammonia) chain to synthesize carbamoyl phosphate. Tetramer of heterodimers (alpha,beta)4. The cofactor is Mg(2+). Mn(2+) serves as cofactor.

The catalysed reaction is hydrogencarbonate + L-glutamine + 2 ATP + H2O = carbamoyl phosphate + L-glutamate + 2 ADP + phosphate + 2 H(+). It catalyses the reaction hydrogencarbonate + NH4(+) + 2 ATP = carbamoyl phosphate + 2 ADP + phosphate + 2 H(+). The protein operates within amino-acid biosynthesis; L-arginine biosynthesis; carbamoyl phosphate from bicarbonate: step 1/1. It functions in the pathway pyrimidine metabolism; UMP biosynthesis via de novo pathway; (S)-dihydroorotate from bicarbonate: step 1/3. Large subunit of the glutamine-dependent carbamoyl phosphate synthetase (CPSase). CPSase catalyzes the formation of carbamoyl phosphate from the ammonia moiety of glutamine, carbonate, and phosphate donated by ATP, constituting the first step of 2 biosynthetic pathways, one leading to arginine and/or urea and the other to pyrimidine nucleotides. The large subunit (synthetase) binds the substrates ammonia (free or transferred from glutamine from the small subunit), hydrogencarbonate and ATP and carries out an ATP-coupled ligase reaction, activating hydrogencarbonate by forming carboxy phosphate which reacts with ammonia to form carbamoyl phosphate. In Escherichia coli O157:H7, this protein is Carbamoyl phosphate synthase large chain.